We begin with the raw amino-acid sequence, 212 residues long: Pyridoxine/pyridoxamine 5'-phosphate oxidase (212 aa).

Residues 8–11 and K66 contribute to the substrate site; that span reads RREY. Residues 61-66, 76-77, R82, K83, and Q105 each bind FMN; these read RIVLLK and FT. 3 residues coordinate substrate: Y123, R127, and S131. FMN-binding positions include 140 to 141 and W185; that span reads QS. 191–193 serves as a coordination point for substrate; the sequence is RLH. R195 is an FMN binding site.

It belongs to the pyridoxamine 5'-phosphate oxidase family. As to quaternary structure, homodimer. The cofactor is FMN.

The catalysed reaction is pyridoxamine 5'-phosphate + O2 + H2O = pyridoxal 5'-phosphate + H2O2 + NH4(+). It carries out the reaction pyridoxine 5'-phosphate + O2 = pyridoxal 5'-phosphate + H2O2. It functions in the pathway cofactor metabolism; pyridoxal 5'-phosphate salvage; pyridoxal 5'-phosphate from pyridoxamine 5'-phosphate: step 1/1. The protein operates within cofactor metabolism; pyridoxal 5'-phosphate salvage; pyridoxal 5'-phosphate from pyridoxine 5'-phosphate: step 1/1. Functionally, catalyzes the oxidation of either pyridoxine 5'-phosphate (PNP) or pyridoxamine 5'-phosphate (PMP) into pyridoxal 5'-phosphate (PLP). In Shewanella baltica (strain OS155 / ATCC BAA-1091), this protein is Pyridoxine/pyridoxamine 5'-phosphate oxidase.